A 122-amino-acid chain; its full sequence is Large ribosomal subunit protein uL14 (122 aa).

The protein belongs to the universal ribosomal protein uL14 family. In terms of assembly, part of the 50S ribosomal subunit. Forms a cluster with proteins L3 and L19. In the 70S ribosome, L14 and L19 interact and together make contacts with the 16S rRNA in bridges B5 and B8.

Functionally, binds to 23S rRNA. Forms part of two intersubunit bridges in the 70S ribosome. The sequence is that of Large ribosomal subunit protein uL14 from Maricaulis maris (strain MCS10) (Caulobacter maris).